A 360-amino-acid chain; its full sequence is Biotin synthase (360 aa).

Residues 1 to 25 (MQHAPLNFVPDAAKVPPTPGQSPNA) are disordered. The region spanning 58–285 (NAVQLSTLLS…KAMVRLSAGR (228 aa)) is the Radical SAM core domain. Cys73, Cys77, and Cys80 together coordinate [4Fe-4S] cluster. [2Fe-2S] cluster is bound by residues Cys117, Cys148, Cys208, and Arg280. Positions 340–360 (QAEGAQHSHSSHCHIDITPAD) are disordered.

This sequence belongs to the radical SAM superfamily. Biotin synthase family. As to quaternary structure, homodimer. The cofactor is [4Fe-4S] cluster. Requires [2Fe-2S] cluster as cofactor.

It catalyses the reaction (4R,5S)-dethiobiotin + (sulfur carrier)-SH + 2 reduced [2Fe-2S]-[ferredoxin] + 2 S-adenosyl-L-methionine = (sulfur carrier)-H + biotin + 2 5'-deoxyadenosine + 2 L-methionine + 2 oxidized [2Fe-2S]-[ferredoxin]. It functions in the pathway cofactor biosynthesis; biotin biosynthesis; biotin from 7,8-diaminononanoate: step 2/2. In terms of biological role, catalyzes the conversion of dethiobiotin (DTB) to biotin by the insertion of a sulfur atom into dethiobiotin via a radical-based mechanism. This chain is Biotin synthase, found in Ralstonia nicotianae (strain ATCC BAA-1114 / GMI1000) (Ralstonia solanacearum).